The chain runs to 234 residues: Large ribosomal subunit protein bL25 (234 aa).

The protein belongs to the bacterial ribosomal protein bL25 family. CTC subfamily. As to quaternary structure, part of the 50S ribosomal subunit; part of the 5S rRNA/L5/L18/L25 subcomplex. Contacts the 5S rRNA. Binds to the 5S rRNA independently of L5 and L18.

This is one of the proteins that binds to the 5S RNA in the ribosome where it forms part of the central protuberance. This chain is Large ribosomal subunit protein bL25, found in Rhodopseudomonas palustris (strain BisA53).